A 1215-amino-acid polypeptide reads, in one-letter code: Chromosome segregation protein sudA (1215 aa).

Gly-32–Ser-39 serves as a coordination point for ATP. A coiled-coil region spans residues Lys-177–Ser-522. Residues Ser-313 to Ala-332 form a disordered region. The SMC hinge domain maps to Glu-538–Ala-650. A disordered region spans residues Gly-654–His-676. The stretch at Asp-684–Tyr-1091 forms a coiled coil.

It belongs to the SMC family. SMC3 subfamily.

It is found in the nucleus. In terms of biological role, involved in chromosome segregation in mitosis. In Emericella nidulans (strain FGSC A4 / ATCC 38163 / CBS 112.46 / NRRL 194 / M139) (Aspergillus nidulans), this protein is Chromosome segregation protein sudA (sudA).